A 466-amino-acid polypeptide reads, in one-letter code: Soluble pyridine nucleotide transhydrogenase (466 aa).

Glu36 to Cys45 contacts FAD.

The protein belongs to the class-I pyridine nucleotide-disulfide oxidoreductase family. The cofactor is FAD.

It is found in the cytoplasm. It catalyses the reaction NAD(+) + NADPH = NADH + NADP(+). Conversion of NADPH, generated by peripheral catabolic pathways, to NADH, which can enter the respiratory chain for energy generation. The chain is Soluble pyridine nucleotide transhydrogenase from Citrobacter koseri (strain ATCC BAA-895 / CDC 4225-83 / SGSC4696).